Here is a 153-residue protein sequence, read N- to C-terminus: Ubiquitin/ISG15-conjugating enzyme E2 L6 (153 aa).

A UBC core domain is found at 2-149; the sequence is TASKRVAKEL…AEEFTLQYGV (148 aa). Residue cysteine 86 is the Glycyl thioester intermediate of the active site.

Belongs to the ubiquitin-conjugating enzyme family. As to quaternary structure, interacts with RNF19A, RNF19B and RNF144B. Interacts with FLT3 (tyrosine phosphorylated). In terms of processing, ISGylated.

It catalyses the reaction S-ubiquitinyl-[E1 ubiquitin-activating enzyme]-L-cysteine + [E2 ubiquitin-conjugating enzyme]-L-cysteine = [E1 ubiquitin-activating enzyme]-L-cysteine + S-ubiquitinyl-[E2 ubiquitin-conjugating enzyme]-L-cysteine.. The protein operates within protein modification; protein ubiquitination. Functionally, catalyzes the covalent attachment of ubiquitin to other proteins. Functions in the E6/E6-AP-induced ubiquitination of p53/TP53. Promotes ubiquitination and subsequent proteasomal degradation of FLT3. This is Ubiquitin/ISG15-conjugating enzyme E2 L6 (Ube2l6) from Rattus norvegicus (Rat).